The sequence spans 440 residues: Transposon TyH3 Gag polyprotein (440 aa).

3 stretches are compositionally biased toward polar residues: residues 1-23 (MESQ…SVTS), 48-60 (TKAN…TPAS), and 127-152 (QSQF…GNTF). 3 disordered regions span residues 1-93 (MESQ…MMTQ), 126-173 (PQSQ…RPPP), and 352-440 (GSRN…PETY). Positions 153-165 (TDSSSADSDMTST) are enriched in low complexity. Residues 299 to 401 (NNGIHINNKV…NSKSKTARAH (103 aa)) are RNA-binding. The span at 402-418 (NVSTSNNSPSTDNDSIS) shows a compositional bias: low complexity. Ser-416 carries the phosphoserine modification. A compositionally biased stretch (polar residues) spans 419–428 (KSTTEPIQLN). Over residues 429-440 (NKHDLHLRPETY) the composition is skewed to basic and acidic residues.

In terms of assembly, homotrimer.

The protein resides in the cytoplasm. Its function is as follows. Capsid protein (CA) is the structural component of the virus-like particle (VLP), forming the shell that encapsulates the retrotransposons dimeric RNA genome. The particles are assembled from trimer-clustered units and there are holes in the capsid shells that allow for the diffusion of macromolecules. CA also has nucleocapsid-like chaperone activity, promoting primer tRNA(i)-Met annealing to the multipartite primer-binding site (PBS), dimerization of Ty1 RNA and initiation of reverse transcription. The chain is Transposon TyH3 Gag polyprotein (TY1A) from Saccharomyces cerevisiae (Baker's yeast).